A 275-amino-acid chain; its full sequence is Sororin-B (275 aa).

Residues 1–16 show a composition bias toward basic and acidic residues; the sequence is MSERKKRGSSDADSRR. Disordered regions lie at residues 1 to 42 and 63 to 117; these read MSER…PAPI and NTGS…EIDV. 2 stretches are compositionally biased toward polar residues: residues 63–76 and 93–112; these read NTGSQFTPKVSNVT and NAFSEQSQMDPKDVTSQSSA. The KEN box motif lies at 91–93; sequence KEN. An FGF motif motif is present at residues 186-188; it reads FGF. Positions 253 to 275 are C-terminal Sororin domain; it reads VDEWAAIMNAEFDEAEKFDLTVE.

This sequence belongs to the sororin family. In terms of assembly, interacts with the APC/C complex. Interacts with the chromatin-bound cohesin complex; the interaction is indirect, occurs after DNA replication and requires acetylation of the cohesin component smc3. Interacts (via the FGF motif) with pds5a and pds5b; the interaction is direct and prevents the interaction of pds5a with wapl. Ubiquitinated by the APC/C complex in G1, leading to its degradation.

The protein localises to the nucleus. It is found in the chromosome. The protein resides in the cytoplasm. Regulator of sister chromatid cohesion in mitosis stabilizing cohesin complex association with chromatin. May antagonize the action of wapl which stimulates cohesin dissociation from chromatin. Cohesion ensures that chromosome partitioning is accurate in both meiotic and mitotic cells and plays an important role in DNA repair. Required for efficient DNA double-stranded break repair. This is Sororin-B (cdca5-b) from Xenopus laevis (African clawed frog).